A 967-amino-acid chain; its full sequence is Kinesin heavy chain (967 aa).

In terms of domain architecture, Kinesin motor spans N8–I326. G85–T92 lines the ATP pocket. Positions V173–K314 are microtubule-binding. 2 disordered regions span residues V387–D411 and K923–A967. Residues P392–L861 are a coiled coil. The interval P862 to A967 is globular. Polar residues predominate over residues Q949–P958.

Belongs to the TRAFAC class myosin-kinesin ATPase superfamily. Kinesin family. Kinesin subfamily. Oligomer composed of two heavy chains and two light chains. Interacts with amyloid-beta precursor-like protein (via cytoplasmic domain).

The protein localises to the cytoplasm. The protein resides in the cytoskeleton. It is found in the cell projection. Its subcellular location is the axon. Functionally, kinesin is a microtubule-associated force-producing protein that may play a role in organelle transport. The chain is Kinesin heavy chain from Doryteuthis pealeii (Longfin inshore squid).